A 400-amino-acid chain; its full sequence is Formate-dependent phosphoribosylglycinamide formyltransferase (400 aa).

N(1)-(5-phospho-beta-D-ribosyl)glycinamide-binding positions include 22–23 (EL) and E82. Residues R115, K157, 162–167 (SSGKGQ), 197–200 (EGFV), and E205 each bind ATP. The 196-residue stretch at 120 to 315 (RLAAETLGLP…EFELHARAIL (196 aa)) folds into the ATP-grasp domain. Residues E274 and E286 each contribute to the Mg(2+) site. Residues D293, K362, and 369-370 (RR) each bind N(1)-(5-phospho-beta-D-ribosyl)glycinamide.

Belongs to the PurK/PurT family. Homodimer.

The catalysed reaction is N(1)-(5-phospho-beta-D-ribosyl)glycinamide + formate + ATP = N(2)-formyl-N(1)-(5-phospho-beta-D-ribosyl)glycinamide + ADP + phosphate + H(+). It participates in purine metabolism; IMP biosynthesis via de novo pathway; N(2)-formyl-N(1)-(5-phospho-D-ribosyl)glycinamide from N(1)-(5-phospho-D-ribosyl)glycinamide (formate route): step 1/1. Functionally, involved in the de novo purine biosynthesis. Catalyzes the transfer of formate to 5-phospho-ribosyl-glycinamide (GAR), producing 5-phospho-ribosyl-N-formylglycinamide (FGAR). Formate is provided by PurU via hydrolysis of 10-formyl-tetrahydrofolate. This is Formate-dependent phosphoribosylglycinamide formyltransferase from Mycolicibacterium vanbaalenii (strain DSM 7251 / JCM 13017 / BCRC 16820 / KCTC 9966 / NRRL B-24157 / PYR-1) (Mycobacterium vanbaalenii).